We begin with the raw amino-acid sequence, 317 residues long: 3-oxoacyl-[acyl-carrier-protein] reductase 5, chloroplastic (317 aa).

Residues 1 to 57 (TTVAATKLTSLKATAGKLGYREICQVRQWAPLKSAMPHFGMLRCATSTVVKAQAQAQ) constitute a chloroplast transit peptide. 79–103 (VTGASRGIGKAIALSLGKAGCKVLV) serves as a coordination point for NADP(+). Residue serine 211 coordinates substrate. The active-site Proton acceptor is the tyrosine 224.

Belongs to the short-chain dehydrogenases/reductases (SDR) family. In terms of assembly, homotetramer.

The protein resides in the plastid. It is found in the chloroplast. The catalysed reaction is a (3R)-hydroxyacyl-[ACP] + NADP(+) = a 3-oxoacyl-[ACP] + NADPH + H(+). The protein operates within lipid metabolism; fatty acid biosynthesis. This Brassica napus (Rape) protein is 3-oxoacyl-[acyl-carrier-protein] reductase 5, chloroplastic (bkr1).